The chain runs to 261 residues: Cytochrome c oxidase subunit 3 (261 aa).

Topologically, residues 1–15 (MTHQTHAYHMVNPSP) are mitochondrial matrix. Residues 16–34 (WPLTGALSALLMTSGLTMW) form a helical membrane-spanning segment. At 35–40 (FHFNSM) the chain is on the mitochondrial intermembrane side. A helical transmembrane segment spans residues 41 to 66 (TLLMIGLTTNMLTMYQWWRDVIREST). The Mitochondrial matrix segment spans residues 67 to 72 (FQGHHT). The chain crosses the membrane as a helical span at residues 73–105 (PAVQKGLRYGMILFIISEVLFFTGFFWAFYHSS). Topologically, residues 106 to 128 (LAPTPELGGCWPPTGIHPLNPLE) are mitochondrial intermembrane. A helical transmembrane segment spans residues 129–152 (VPLLNTSVLLASGVSITWAHHSLM). Residues 153–155 (EGD) lie on the Mitochondrial matrix side of the membrane. Residues 156-183 (RKHMLQALFITITLGVYFTLLQASEYYE) traverse the membrane as a helical segment. Residues 184–190 (APFTISD) lie on the Mitochondrial intermembrane side of the membrane. Residues 191-223 (GVYGSTFFVATGFHGLHVIIGSTFLIVCFFRQL) form a helical membrane-spanning segment. The Mitochondrial matrix segment spans residues 224–232 (KFHFTSNHH). A helical transmembrane segment spans residues 233-256 (FGFEAAAWYWHFVDVVWLFLYVSI). Topologically, residues 257–261 (YWWGS) are mitochondrial intermembrane.

The protein belongs to the cytochrome c oxidase subunit 3 family. As to quaternary structure, component of the cytochrome c oxidase (complex IV, CIV), a multisubunit enzyme composed of 14 subunits. The complex is composed of a catalytic core of 3 subunits MT-CO1, MT-CO2 and MT-CO3, encoded in the mitochondrial DNA, and 11 supernumerary subunits COX4I1 (or COX4I2), COX5A, COX5B, COX6A2 (or COX6A1), COX6B1 (or COX6B2), COX6C, COX7A1 (or COX7A2), COX7B, COX7C, COX8B and NDUFA4, which are encoded in the nuclear genome. The complex exists as a monomer or a dimer and forms supercomplexes (SCs) in the inner mitochondrial membrane with NADH-ubiquinone oxidoreductase (complex I, CI) and ubiquinol-cytochrome c oxidoreductase (cytochrome b-c1 complex, complex III, CIII), resulting in different assemblies (supercomplex SCI(1)III(2)IV(1) and megacomplex MCI(2)III(2)IV(2)).

The protein localises to the mitochondrion inner membrane. The enzyme catalyses 4 Fe(II)-[cytochrome c] + O2 + 8 H(+)(in) = 4 Fe(III)-[cytochrome c] + 2 H2O + 4 H(+)(out). In terms of biological role, component of the cytochrome c oxidase, the last enzyme in the mitochondrial electron transport chain which drives oxidative phosphorylation. The respiratory chain contains 3 multisubunit complexes succinate dehydrogenase (complex II, CII), ubiquinol-cytochrome c oxidoreductase (cytochrome b-c1 complex, complex III, CIII) and cytochrome c oxidase (complex IV, CIV), that cooperate to transfer electrons derived from NADH and succinate to molecular oxygen, creating an electrochemical gradient over the inner membrane that drives transmembrane transport and the ATP synthase. Cytochrome c oxidase is the component of the respiratory chain that catalyzes the reduction of oxygen to water. Electrons originating from reduced cytochrome c in the intermembrane space (IMS) are transferred via the dinuclear copper A center (CU(A)) of subunit 2 and heme A of subunit 1 to the active site in subunit 1, a binuclear center (BNC) formed by heme A3 and copper B (CU(B)). The BNC reduces molecular oxygen to 2 water molecules using 4 electrons from cytochrome c in the IMS and 4 protons from the mitochondrial matrix. This is Cytochrome c oxidase subunit 3 (MT-CO3) from Bos taurus (Bovine).